A 110-amino-acid polypeptide reads, in one-letter code: Ribonuclease P protein component (110 aa).

This sequence belongs to the RnpA family. Consists of a catalytic RNA component (M1 or rnpB) and a protein subunit.

It catalyses the reaction Endonucleolytic cleavage of RNA, removing 5'-extranucleotides from tRNA precursor.. RNaseP catalyzes the removal of the 5'-leader sequence from pre-tRNA to produce the mature 5'-terminus. It can also cleave other RNA substrates such as 4.5S RNA. The protein component plays an auxiliary but essential role in vivo by binding to the 5'-leader sequence and broadening the substrate specificity of the ribozyme. This is Ribonuclease P protein component from Mesorhizobium japonicum (strain LMG 29417 / CECT 9101 / MAFF 303099) (Mesorhizobium loti (strain MAFF 303099)).